A 517-amino-acid polypeptide reads, in one-letter code: Maturase K (517 aa).

It belongs to the intron maturase 2 family. MatK subfamily.

The protein resides in the plastid. Its subcellular location is the chloroplast. Its function is as follows. Usually encoded in the trnK tRNA gene intron. Probably assists in splicing its own and other chloroplast group II introns. The chain is Maturase K from Phalaenopsis japonica (Orchid).